Consider the following 387-residue polypeptide: Protein adenylyltransferase VopS (387 aa).

ATP contacts are provided by residues Ile76–Thr77, Leu122–Ser124, Gly353–Gly355, and Arg359. The 110-residue stretch at Leu278–Lys387 folds into the Fido domain.

Its subcellular location is the secreted. The catalysed reaction is L-tyrosyl-[protein] + ATP = O-(5'-adenylyl)-L-tyrosyl-[protein] + diphosphate. The enzyme catalyses L-threonyl-[protein] + ATP = 3-O-(5'-adenylyl)-L-threonyl-[protein] + diphosphate. Functionally, adenylyltransferase involved in virulence by mediating the addition of adenosine 5'-monophosphate (AMP) to specific threonine residue of host Rho GTPases RhoA, Rac and Cdc42. The resulting AMPylation prevents the interaction of Rho GTPases with downstream effectors, thereby inhibiting actin assembly in infected cells. In Vibrio parahaemolyticus serotype O3:K6 (strain RIMD 2210633), this protein is Protein adenylyltransferase VopS (vopS).